Here is a 688-residue protein sequence, read N- to C-terminus: Potassium-transporting ATPase ATP-binding subunit (688 aa).

4 consecutive transmembrane segments (helical) span residues 34–54 (PVMFVVYLGSGLTTLIWLAIL), 62–82 (ALFTGSVALWLWFTVLFANFA), 219–239 (VALTILLVALTIVFLLATATL), and 260–280 (VLVALLVCLIPTTIGGLLSAI). The active-site 4-aspartylphosphate intermediate is D313. Residues D350, E354, 383-390 (FSAQTRMS), and K401 each bind ATP. D524 and D528 together coordinate Mg(2+). 3 helical membrane passes run 594–614 (FAIIPAAFAATYPQLNALNVM), 622–642 (AILSAVIFNALIIVFLIPLAL), and 667–687 (GLLVPFVGIKLIDLVLAALIM).

This sequence belongs to the cation transport ATPase (P-type) (TC 3.A.3) family. Type IA subfamily. In terms of assembly, the system is composed of three essential subunits: KdpA, KdpB and KdpC.

The protein localises to the cell inner membrane. It catalyses the reaction K(+)(out) + ATP + H2O = K(+)(in) + ADP + phosphate + H(+). In terms of biological role, part of the high-affinity ATP-driven potassium transport (or Kdp) system, which catalyzes the hydrolysis of ATP coupled with the electrogenic transport of potassium into the cytoplasm. This subunit is responsible for energy coupling to the transport system and for the release of the potassium ions to the cytoplasm. This Yersinia enterocolitica serotype O:8 / biotype 1B (strain NCTC 13174 / 8081) protein is Potassium-transporting ATPase ATP-binding subunit.